We begin with the raw amino-acid sequence, 211 residues long: Probable nicotinate-nucleotide adenylyltransferase (211 aa).

It belongs to the NadD family.

It catalyses the reaction nicotinate beta-D-ribonucleotide + ATP + H(+) = deamido-NAD(+) + diphosphate. Its pathway is cofactor biosynthesis; NAD(+) biosynthesis; deamido-NAD(+) from nicotinate D-ribonucleotide: step 1/1. Catalyzes the reversible adenylation of nicotinate mononucleotide (NaMN) to nicotinic acid adenine dinucleotide (NaAD). The polypeptide is Probable nicotinate-nucleotide adenylyltransferase (Shewanella sediminis (strain HAW-EB3)).